The primary structure comprises 1045 residues: MDIS1-interacting receptor like kinase 2 (1045 aa).

Residues 1 to 43 form the signal peptide; that stretch reads MNKTNPERKISLTSFKERMACKEKPRDLQVLLIISIVLSCSFA. Over 44-709 the chain is Extracellular; it reads VSATVEEANA…SKKSHKDRNL (666 aa). 4 N-linked (GlcNAc...) asparagine glycosylation sites follow: Asn-63, Asn-77, Asn-99, and Asn-119. LRR repeat units lie at residues 92 to 116, 117 to 140, 141 to 165, 166 to 189, 191 to 212, 213 to 237, 238 to 260, 262 to 285, 286 to 309, 311 to 333, 334 to 356, 357 to 381, 383 to 405, 406 to 429, 431 to 452, 453 to 476, 477 to 501, 502 to 525, 527 to 549, 550 to 573, 575 to 597, 598 to 620, 621 to 644, and 646 to 670; these read LGSIIRLNLTNTGIEGTFEDFPFSS, LPNLTFVDLSMNRFSGTISPLWGR, FSKLEYFDLSINQLVGEIPPELGDL, SNLDTLHLVENKLNGSIPSEIGRL, KVTEIAIYDNLLTGPIPSSFGN, LTKLVNLYLFINSLSGSIPSEIGNL, PNLRELCLDRNNLTGKIPSSFGN, KNVTLLNMFENQLSGEIPPEIGNM, TALDTLSLHTNKLTGPIPSTLGNI, TLAVLHLYLNQLNGSIPPELGEM, ESMIDLEISENKLTGPVPDSFGK, LTALEWLFLRDNQLSGPIPPGIANS, ELTVLQLDTNNFTGFLPDTICRG, GKLENLTLDDNHFEGPVPKSLRDC, SLIRVRFKGNSFSGDISEAFGV, YPTLNFIDLSNNNFHGQLSANWEQ, SQKLVAFILSNNSITGAIPPEIWNM, TQLSQLDLSSNRITGELPESISNI, RISKLQLNGNRLSGKIPSGIRLL, TNLEYLDLSSNRFSSEIPPTLNNL, RLYYMNLSRNDLDQTIPEGLTKL, SQLQMLDLSYNQLDGEISSQFRS, LQNLERLDLSHNNLSGQIPPSFKD, and LALTHVDVSHNNLQGPIPDNAAFRN. 2 N-linked (GlcNAc...) asparagine glycosylation sites follow: Asn-179 and Asn-212. N-linked (GlcNAc...) asparagine glycans are attached at residues Asn-249, Asn-263, and Asn-284. Asn-323 is a glycosylation site (N-linked (GlcNAc...) asparagine). Residues Asn-380, Asn-393, and Asn-410 are each glycosylated (N-linked (GlcNAc...) asparagine). Asn-487 and Asn-500 each carry an N-linked (GlcNAc...) asparagine glycan. Asn-580 carries an N-linked (GlcNAc...) asparagine glycan. Asn-633 carries an N-linked (GlcNAc...) asparagine glycan. The N-linked (GlcNAc...) asparagine glycan is linked to Asn-687. The chain crosses the membrane as a helical span at residues 710–730; it reads IIYILVPIIGAIIILSVCAGI. Residues 731-1045 lie on the Cytoplasmic side of the membrane; the sequence is FICFRKRTKQ…TMLSISTAFS (315 aa). Thr-772 carries the phosphothreonine modification. In terms of domain architecture, Protein kinase spans 775–1045; that stretch reads FDPKYLIGTG…TMLSISTAFS (271 aa). ATP-binding positions include 781–789 and Lys-802; that span reads IGTGGHGKV. 2 positions are modified to phosphotyrosine: Tyr-853 and Tyr-892. Asp-905 acts as the Proton acceptor in catalysis. Ser-938 is subject to Phosphoserine. Phosphotyrosine occurs at positions 946 and 953.

The protein belongs to the protein kinase superfamily. Ser/Thr protein kinase family. In terms of assembly, interacts with MDIS1 and LURE1.2. Binds to SCOOP12; this interaction triggers the formation of complex between MIK2 and the BAK1/SERK3 and SERK4 coreceptors. Expressed in pollen tubes. Highly expressed in shoots, roots and leaves.

The protein resides in the cell membrane. The enzyme catalyses L-seryl-[protein] + ATP = O-phospho-L-seryl-[protein] + ADP + H(+). It carries out the reaction L-threonyl-[protein] + ATP = O-phospho-L-threonyl-[protein] + ADP + H(+). Acts as a receptor of SCOOP peptides from Brassicaceae plants regulating multiple processing including plant growth, development and stress responses. Perception of SCOOP peptides induces the association of MIK2 with the coreceptors BAK1/SERK3 and SERK4 and relays the signaling through the activation of receptor-like cytosolic kinases (RLCKs) BIK1 and PBL1. Also able to detect SCOOP-like proteins (SCOOPL) present in fungal Fusarium spp. and bacterial Comamonadaceae to elicit various immune responses, including growth inhibition, ROS production, calcium Ca(2+) influx, MAPK activation and MYB51 promoter activation in roots, thus being required for resistance to several root pathogens. Involved in the pollen tube perception of the female signal. Required to trigger defense responses toward generalist herbivores such as Spodoptera littoralis, probably via the activation of jasmonate and indole glucosinolate biosynthesis. This is MDIS1-interacting receptor like kinase 2 from Arabidopsis thaliana (Mouse-ear cress).